The primary structure comprises 344 residues: uncharacterized protein (344 aa).

Residues 323–332 (KQQEQREQGR) are compositionally biased toward basic and acidic residues. The segment at 323–344 (KQQEQREQGRRAAYLQQRGMER) is disordered.

This is an uncharacterized protein from Bacillus anthracis.